Consider the following 133-residue polypeptide: Exosome complex protein C1739.07 (133 aa).

Positions 96 to 133 (VNPKTEAVNTSNAAISSSSSNRPKVAKDAATRIIKHHT) are disordered. Positions 102–116 (AVNTSNAAISSSSSN) are enriched in low complexity.

This sequence belongs to the C1D family. As to quaternary structure, component of the exosome multienzyme ribonuclease complex. Interacts with cut3.

The protein resides in the cytoplasm. It is found in the nucleus. Functionally, required for exosome-dependent processing of pre-rRNA and small nucleolar RNA (snRNA) precursors. Involved in processing of 35S pre-rRNA at the A0, A1 and A2 sites. In Schizosaccharomyces pombe (strain 972 / ATCC 24843) (Fission yeast), this protein is Exosome complex protein C1739.07.